The chain runs to 179 residues: Adenine phosphoribosyltransferase (179 aa).

This sequence belongs to the purine/pyrimidine phosphoribosyltransferase family. Homodimer.

Its subcellular location is the cytoplasm. It catalyses the reaction AMP + diphosphate = 5-phospho-alpha-D-ribose 1-diphosphate + adenine. Its pathway is purine metabolism; AMP biosynthesis via salvage pathway; AMP from adenine: step 1/1. Catalyzes a salvage reaction resulting in the formation of AMP, that is energically less costly than de novo synthesis. The sequence is that of Adenine phosphoribosyltransferase from Ruegeria pomeroyi (strain ATCC 700808 / DSM 15171 / DSS-3) (Silicibacter pomeroyi).